The following is a 1008-amino-acid chain: CRAL-TRIO domain-containing protein C23B6.04c (1008 aa).

3 disordered regions span residues 1 to 247 (MKDS…AKSE), 284 to 306 (DGRD…DVDS), and 374 to 514 (QKVV…ASAK). Residues 79–110 (TVHTKTGSSSSPASKMRNTVNLQHIQAANQKT) are compositionally biased toward polar residues. 2 stretches are compositionally biased toward basic and acidic residues: residues 111 to 131 (RNAE…KAEA) and 170 to 187 (MNDK…DSKL). Polar residues-rich tracts occupy residues 374-389 (QKVV…STDN), 397-432 (DHPS…TSPK), 467-478 (GGNSVTAPSTPS), and 495-505 (GRSSTAPSTPN). A phosphoserine mark is found at S525 and S559. The 154-residue stretch at 675 to 828 (EIQEENATGK…NFGGSLHFEY (154 aa)) folds into the CRAL-TRIO domain. Residues 883–982 (SLTNRSSSPT…KSGSGVSETP (100 aa)) are disordered. A compositionally biased stretch (low complexity) spans 885-899 (TNRSSSPTVTPTVNT). Residues S888 and S890 each carry the phosphoserine modification. Positions 914-931 (SPQKRRVENPKPVVKDEG) are enriched in basic and acidic residues.

The protein localises to the cell membrane. The protein is CRAL-TRIO domain-containing protein C23B6.04c of Schizosaccharomyces pombe (strain 972 / ATCC 24843) (Fission yeast).